The following is a 402-amino-acid chain: Speedy protein E6 (402 aa).

Residues 1–89 (MDRTETRFRK…EEPEKELAPE (89 aa)) form a disordered region. A compositionally biased stretch (polar residues) spans 16–39 (GKITTSRQPHPQNEQSPQRSTSGY). Residues 76-89 (DESEEEPEKELAPE) are compositionally biased toward acidic residues.

The protein belongs to the Speedy/Ringo family.

This is Speedy protein E6 (SPDYE6) from Homo sapiens (Human).